Here is a 254-residue protein sequence, read N- to C-terminus: Cytokine-inducible SH2-containing protein (254 aa).

In terms of domain architecture, SH2 spans 82-188 (WYWGSITASE…ATTPALPTPK (107 aa)). The interval 171 to 195 (TRSDSPDLATTPALPTPKEDAPGDP) is disordered. Residues 205–253 (KLVQPFVRRSSTRSLQHLCRLVINRLVVDVDCLPLPRRMADYLRQYPFQ) form the SOCS box domain.

Stably associated with the tyrosine-phosphorylated IL3 receptor beta chain and tyrosine-phosphorylated EPO receptor (EPOR).

Its pathway is protein modification; protein ubiquitination. Its function is as follows. SOCS family proteins form part of a classical negative feedback system that regulates cytokine signal transduction. CIS is involved in the negative regulation of cytokines that signal through the JAK-STAT5 pathway such as erythropoietin, prolactin and interleukin 3 (IL3) receptor. Inhibits STAT5 trans-activation by suppressing its tyrosine phosphorylation. May be a substrate recognition component of a SCF-like ECS (Elongin BC-CUL2/5-SOCS-box protein) E3 ubiquitin-protein ligase complex which mediates the ubiquitination and subsequent proteasomal degradation of target proteins. The polypeptide is Cytokine-inducible SH2-containing protein (CISH) (Bos taurus (Bovine)).